A 170-amino-acid chain; its full sequence is Alpha-crystallin A chain (170 aa).

An N-acetylmethionine modification is found at Met-1. The segment at 1–63 (MDVTIQHPWF…RTALDSGISE (63 aa)) is required for complex formation with BFSP1 and BFSP2. Gln-6 bears the Deamidated glutamine; partial mark. Ser-45 carries the phosphoserine modification. A Deamidated glutamine; partial modification is found at Gln-50. The region spanning 52–161 (LFRTALDSGI…GERTIPVSRE (110 aa)) is the sHSP domain. Residue Lys-99 is modified to N6-acetyllysine. His-100 lines the Zn(2+) pocket. Residue Asn-101 is modified to Deamidated asparagine; partial. Positions 102, 107, and 151 each coordinate Zn(2+). Residues 144–170 (PKLVDPSHGERTIPVSREEKPSSAPSS) form a disordered region. Positions 148–164 (DPSHGERTIPVSREEKP) are enriched in basic and acidic residues. Ser-159 is a glycosylation site (O-linked (GlcNAc) serine).

This sequence belongs to the small heat shock protein (HSP20) family. In terms of assembly, heteromer composed of three CRYAA and one CRYAB subunits. Inter-subunit bridging via zinc ions enhances stability, which is crucial as there is no protein turn over in the lens. Can also form homodimers and homotetramers (dimers of dimers) which serve as the building blocks of homooligomers. Within homooligomers, the zinc-binding motif is created from residues of 3 different molecules. His-100 and Glu-102 from one molecule are ligands of the zinc ion, and His-107 and His-151 residues from additional molecules complete the site with tetrahedral coordination geometry. Part of a complex required for lens intermediate filament formation composed of BFSP1, BFSP2 and CRYAA. In terms of processing, acetylation at Lys-99 may increase chaperone activity. Undergoes age-dependent proteolytical cleavage at the C-terminus.

Its subcellular location is the cytoplasm. The protein localises to the nucleus. In terms of biological role, contributes to the transparency and refractive index of the lens. Acts as a chaperone, preventing aggregation of various proteins under a wide range of stress conditions. Required for the correct formation of lens intermediate filaments as part of a complex composed of BFSP1, BFSP2 and CRYAA. This Tamandua mexicana (Northern Tamandua) protein is Alpha-crystallin A chain (CRYAA).